Here is a 750-residue protein sequence, read N- to C-terminus: Retron Eco8 OLD nuclease (750 aa).

Residues 1–173 (MTIESIRVKN…IDLYDWNPIW (173 aa)) are ATPase domain N-terminus. 33-37 (NVGKS) is a binding site for ATP. Residues 174–260 (KLISNLNSFN…TQSDGTNSNK (87 aa)) form a dimerization domain region. The interval 261–390 (FLETLLHLLI…FSDNEARLFF (130 aa)) is ATPase domain C-terminus. The segment at 391–704 (SEYIVFVEGA…SGWVTTFLNY (314 aa)) is toprim domain. A divalent metal cation-binding residues include Glu-398, Glu-402, Asp-450, Asp-452, Ser-623, and Glu-641.

The protein belongs to the class 1 OLD nuclease family. In terms of assembly, homodimer. A divalent metal cation is required as a cofactor.

Its function is as follows. Probable nuclease member of antiviral defense system retron Eco8, composed of an reverse transcriptase (RT), this nuclease and a non-coding RNA (ncRNA) encoded between them. Expression of retron Eco8 confers protection against bacteriophages T4, T6, T7 and SECphi4, SECphi6 and SECphi18. At multiplicity of infection (MOI) of 0.02 cultures slow growth when infected with SECphi4 but do not collapse, at MOI 2 cultures collapse. When the retron is cloned in another E.coli strain synthesizes msDNA (a branched RNA linked by a 2',5'-phosphodiester bond to a single-stranded DNA). The retron transcript serves as primer and template to the reaction, and codes for the RT. The protein is Retron Eco8 OLD nuclease of Escherichia coli.